We begin with the raw amino-acid sequence, 186 residues long: Large ribosomal subunit protein uL5 (186 aa).

Belongs to the universal ribosomal protein uL5 family. In terms of assembly, part of the 50S ribosomal subunit; part of the 5S rRNA/L5/L18/L25 subcomplex. Contacts the 5S rRNA and the P site tRNA. Forms a bridge to the 30S subunit in the 70S ribosome.

Its function is as follows. This is one of the proteins that bind and probably mediate the attachment of the 5S RNA into the large ribosomal subunit, where it forms part of the central protuberance. In the 70S ribosome it contacts protein S13 of the 30S subunit (bridge B1b), connecting the 2 subunits; this bridge is implicated in subunit movement. Contacts the P site tRNA; the 5S rRNA and some of its associated proteins might help stabilize positioning of ribosome-bound tRNAs. This chain is Large ribosomal subunit protein uL5, found in Phenylobacterium zucineum (strain HLK1).